A 500-amino-acid polypeptide reads, in one-letter code: Serine carboxypeptidase 3 (500 aa).

An N-terminal signal peptide occupies residues 1 to 21 (MATARVSLILLVVVLAASACA). The propeptide occupies 22–73 (EGLRLPRDAKFPAAQAERLIRSLNLLPKEAGPTGAGDVPSVAPGELLERRVT). 3 disulfide bridges follow: Cys-126-Cys-366, Cys-294-Cys-309, and Cys-332-Cys-337. A glycan (N-linked (GlcNAc...) asparagine) is linked at Asn-144. Residue Ser-216 is part of the active site. Asp-404 is a catalytic residue. Residue Cys-407 coordinates substrate. His-461 is a catalytic residue. Positions 485-500 (EEWLAELPEQPMYAAM) are excised as a propeptide.

It belongs to the peptidase S10 family. In terms of assembly, monomer.

It carries out the reaction Release of a C-terminal amino acid with broad specificity.. The protein is Serine carboxypeptidase 3 (CBP3) of Oryza sativa subsp. japonica (Rice).